Consider the following 556-residue polypeptide: Adenine deaminase (556 aa).

The protein belongs to the metallo-dependent hydrolases superfamily. Adenine deaminase family. Requires Mn(2+) as cofactor.

It carries out the reaction adenine + H2O + H(+) = hypoxanthine + NH4(+). The sequence is that of Adenine deaminase from Methanocaldococcus jannaschii (strain ATCC 43067 / DSM 2661 / JAL-1 / JCM 10045 / NBRC 100440) (Methanococcus jannaschii).